A 358-amino-acid chain; its full sequence is Peptide chain release factor 1 (358 aa).

Glutamine 233 is subject to N5-methylglutamine.

It belongs to the prokaryotic/mitochondrial release factor family. Post-translationally, methylated by PrmC. Methylation increases the termination efficiency of RF1.

Its subcellular location is the cytoplasm. Functionally, peptide chain release factor 1 directs the termination of translation in response to the peptide chain termination codons UAG and UAA. The chain is Peptide chain release factor 1 from Staphylococcus saprophyticus subsp. saprophyticus (strain ATCC 15305 / DSM 20229 / NCIMB 8711 / NCTC 7292 / S-41).